The following is a 339-amino-acid chain: Phosphate acyltransferase (339 aa).

It belongs to the PlsX family. Homodimer. Probably interacts with PlsY.

Its subcellular location is the cytoplasm. The catalysed reaction is a fatty acyl-[ACP] + phosphate = an acyl phosphate + holo-[ACP]. Its pathway is lipid metabolism; phospholipid metabolism. In terms of biological role, catalyzes the reversible formation of acyl-phosphate (acyl-PO(4)) from acyl-[acyl-carrier-protein] (acyl-ACP). This enzyme utilizes acyl-ACP as fatty acyl donor, but not acyl-CoA. The protein is Phosphate acyltransferase of Helicobacter pylori (strain Shi470).